Reading from the N-terminus, the 140-residue chain is uncharacterized protein (140 aa).

This sequence to B.subtilis YrhD.

This is an uncharacterized protein from Archaeoglobus fulgidus (strain ATCC 49558 / DSM 4304 / JCM 9628 / NBRC 100126 / VC-16).